A 447-amino-acid polypeptide reads, in one-letter code: Signal recognition particle 54 kDa protein (447 aa).

GTP contacts are provided by residues 108–115, 188–192, and 246–249; these read GLYGMGKT, DTAGR, and TKLD.

It belongs to the GTP-binding SRP family. SRP54 subfamily. In terms of assembly, part of the signal recognition particle protein translocation system, which is composed of SRP and FtsY. Archaeal SRP consists of a 7S RNA molecule of 300 nucleotides and two protein subunits: SRP54 and SRP19.

The protein resides in the cytoplasm. The enzyme catalyses GTP + H2O = GDP + phosphate + H(+). Involved in targeting and insertion of nascent membrane proteins into the cytoplasmic membrane. Binds to the hydrophobic signal sequence of the ribosome-nascent chain (RNC) as it emerges from the ribosomes. The SRP-RNC complex is then targeted to the cytoplasmic membrane where it interacts with the SRP receptor FtsY. The sequence is that of Signal recognition particle 54 kDa protein from Methanopyrus kandleri (strain AV19 / DSM 6324 / JCM 9639 / NBRC 100938).